A 105-amino-acid chain; its full sequence is Met repressor (105 aa).

This sequence belongs to the MetJ family. In terms of assembly, homodimer.

It is found in the cytoplasm. This regulatory protein, when combined with SAM (S-adenosylmethionine) represses the expression of the methionine regulon and of enzymes involved in SAM synthesis. In Actinobacillus succinogenes (strain ATCC 55618 / DSM 22257 / CCUG 43843 / 130Z), this protein is Met repressor.